Consider the following 268-residue polypeptide: UPF0328 protein ECU09_2030 (268 aa).

The protein belongs to the UPF0328 family.

The polypeptide is UPF0328 protein ECU09_2030 (Encephalitozoon cuniculi (strain GB-M1) (Microsporidian parasite)).